Consider the following 442-residue polypeptide: MSNTKQAPKVGFVSLGCPKNLVDSERILTQLRTEGYDVVPSYDDAEVVVVNTCGFIDSAVQESLEAIGEALAENGKVIVTGCLGAKENQIREIHPKVLEITGPHAYEEVLGHVHKYVEKPTHNPFTSLVPAQGVKLTPRHYAYLKISEGCNHRCTFCIIPSMRGDLVSRPIGEVLAEAKRLKEAGVKEILVISQDTSAYGVDVKHRTGFYDGMPVKTSMVALCEELAKLGMWVRLHYVYPYPHVDDVIPLMRDGKVLPYLDIPLQHASPRILKLMKRPGTVERTLERIQKWREICPEITLRSTFIVGFPGETEEEFQMLLDFIDKAELDRVGCFKYSPVEGAKANELPDPVPEEVQEERFQRFMELQQQVSIRKLARKVGKEMLVLIDEVDEEGATGRSAADAPEIDGLVYLNGETGLKPGDMVKVRIDEADEYDLWASLID.

Positions 8-118 (PKVGFVSLGC…VLGHVHKYVE (111 aa)) constitute an MTTase N-terminal domain. Cys17, Cys53, Cys82, Cys150, Cys154, and Cys157 together coordinate [4Fe-4S] cluster. In terms of domain architecture, Radical SAM core spans 136–373 (LTPRHYAYLK…MELQQQVSIR (238 aa)). One can recognise a TRAM domain in the interval 376 to 442 (ARKVGKEMLV…EYDLWASLID (67 aa)).

The protein belongs to the methylthiotransferase family. RimO subfamily. Requires [4Fe-4S] cluster as cofactor.

The protein localises to the cytoplasm. The enzyme catalyses L-aspartate(89)-[ribosomal protein uS12]-hydrogen + (sulfur carrier)-SH + AH2 + 2 S-adenosyl-L-methionine = 3-methylsulfanyl-L-aspartate(89)-[ribosomal protein uS12]-hydrogen + (sulfur carrier)-H + 5'-deoxyadenosine + L-methionine + A + S-adenosyl-L-homocysteine + 2 H(+). In terms of biological role, catalyzes the methylthiolation of an aspartic acid residue of ribosomal protein uS12. The protein is Ribosomal protein uS12 methylthiotransferase RimO of Aeromonas hydrophila subsp. hydrophila (strain ATCC 7966 / DSM 30187 / BCRC 13018 / CCUG 14551 / JCM 1027 / KCTC 2358 / NCIMB 9240 / NCTC 8049).